Here is a 117-residue protein sequence, read N- to C-terminus: Putative membrane protein insertion efficiency factor (117 aa).

Belongs to the UPF0161 family.

It is found in the cell inner membrane. Functionally, could be involved in insertion of integral membrane proteins into the membrane. In Nitrobacter winogradskyi (strain ATCC 25391 / DSM 10237 / CIP 104748 / NCIMB 11846 / Nb-255), this protein is Putative membrane protein insertion efficiency factor.